The following is a 265-amino-acid chain: Glutamate racemase (265 aa).

Substrate contacts are provided by residues 12–13 and 44–45; these read DS and YG. Catalysis depends on Cys75, which acts as the Proton donor/acceptor. 76–77 contacts substrate; it reads NT. The Proton donor/acceptor role is filled by Cys186. Residue 187-188 participates in substrate binding; the sequence is TH.

It belongs to the aspartate/glutamate racemases family.

The enzyme catalyses L-glutamate = D-glutamate. It functions in the pathway cell wall biogenesis; peptidoglycan biosynthesis. Its function is as follows. Provides the (R)-glutamate required for cell wall biosynthesis. In Pseudomonas putida (strain ATCC 700007 / DSM 6899 / JCM 31910 / BCRC 17059 / LMG 24140 / F1), this protein is Glutamate racemase.